Reading from the N-terminus, the 160-residue chain is Small ribosomal subunit protein bS6 (160 aa).

The disordered stretch occupies residues 96 to 160; that stretch reads RKVKRFIPRA…PRTRKVSKEQ (65 aa). Residues 126 to 145 are compositionally biased toward low complexity; sequence TTDASKTEASTEATASKQSE. Residues 151-160 are compositionally biased toward basic residues; that stretch reads PRTRKVSKEQ.

The protein belongs to the bacterial ribosomal protein bS6 family.

Functionally, binds together with bS18 to 16S ribosomal RNA. The chain is Small ribosomal subunit protein bS6 from Metamycoplasma arthritidis (strain 158L3-1) (Mycoplasma arthritidis).